The chain runs to 91 residues: RNA-binding protein Hfq (91 aa).

In terms of domain architecture, Sm spans 9 to 68 (DPYLNALRRERIPVSIYLVNGIKLQGQIESFDQFVILLKNTVNQMVYKHAISTVVPARSV). The segment at 68 to 91 (VSHHNNNHHTTPTEAVENVETQAE) is disordered.

The protein belongs to the Hfq family. Homohexamer.

In terms of biological role, RNA chaperone that binds small regulatory RNA (sRNAs) and mRNAs to facilitate mRNA translational regulation in response to envelope stress, environmental stress and changes in metabolite concentrations. Also binds with high specificity to tRNAs. In Haemophilus influenzae (strain 86-028NP), this protein is RNA-binding protein Hfq.